An 85-amino-acid polypeptide reads, in one-letter code: UPF0434 protein HNE_3545 (85 aa).

It belongs to the UPF0434 family.

The protein is UPF0434 protein HNE_3545 of Hyphomonas neptunium (strain ATCC 15444).